A 424-amino-acid chain; its full sequence is CinA-like protein (424 aa).

The protein belongs to the CinA family.

The polypeptide is CinA-like protein (Prochlorococcus marinus (strain MIT 9312)).